Reading from the N-terminus, the 690-residue chain is Glycine--tRNA ligase beta subunit (690 aa).

Belongs to the class-II aminoacyl-tRNA synthetase family. As to quaternary structure, tetramer of two alpha and two beta subunits.

Its subcellular location is the cytoplasm. The catalysed reaction is tRNA(Gly) + glycine + ATP = glycyl-tRNA(Gly) + AMP + diphosphate. This Buchnera aphidicola subsp. Acyrthosiphon pisum (strain Tuc7) protein is Glycine--tRNA ligase beta subunit.